Here is a 469-residue protein sequence, read N- to C-terminus: Citrate synthase, mitochondrial (469 aa).

A mitochondrion-targeting transit peptide spans 1-28; that stretch reads MAFFRTVTKLRSRLGQPPSLRDSVRCLQ. Active-site residues include His304, His350, and Asp405.

Belongs to the citrate synthase family. Homodimer.

The protein resides in the mitochondrion matrix. The catalysed reaction is oxaloacetate + acetyl-CoA + H2O = citrate + CoA + H(+). Its pathway is carbohydrate metabolism; tricarboxylic acid cycle; isocitrate from oxaloacetate: step 1/2. This Fragaria ananassa (Strawberry) protein is Citrate synthase, mitochondrial (MCSI).